A 102-amino-acid polypeptide reads, in one-letter code: Glycoprotein 24A (102 aa).

Belongs to the csb family. In terms of processing, O-glycosylated.

It localises to the cell surface. Cell-cell adhesion during early development. The protein is Glycoprotein 24A (csbA) of Dictyostelium discoideum (Social amoeba).